A 58-amino-acid polypeptide reads, in one-letter code: Ribosome modulation factor (58 aa).

The segment covering 1 to 14 has biased composition (basic residues); it reads MKRQKRDKLTRAHS. Positions 1-25 are disordered; the sequence is MKRQKRDKLTRAHSKGYQAGISGRS.

This sequence belongs to the ribosome modulation factor family.

Its subcellular location is the cytoplasm. In terms of biological role, during stationary phase, converts 70S ribosomes to an inactive dimeric form (100S ribosomes). The chain is Ribosome modulation factor from Alteromonas naphthalenivorans.